The chain runs to 336 residues: Dihydroorotate dehydrogenase (quinone) (336 aa).

FMN-binding positions include 62–66 (AGLDK) and threonine 86. Lysine 66 lines the substrate pocket. 111–115 (NRMGF) serves as a coordination point for substrate. Positions 139 and 172 each coordinate FMN. Residue asparagine 172 coordinates substrate. Serine 175 (nucleophile) is an active-site residue. Asparagine 177 is a substrate binding site. Lysine 217 and threonine 245 together coordinate FMN. 246–247 (NT) lines the substrate pocket. FMN is bound by residues glycine 268, glycine 297, and 318–319 (YS).

This sequence belongs to the dihydroorotate dehydrogenase family. Type 2 subfamily. As to quaternary structure, monomer. The cofactor is FMN.

Its subcellular location is the cell membrane. The enzyme catalyses (S)-dihydroorotate + a quinone = orotate + a quinol. The protein operates within pyrimidine metabolism; UMP biosynthesis via de novo pathway; orotate from (S)-dihydroorotate (quinone route): step 1/1. Functionally, catalyzes the conversion of dihydroorotate to orotate with quinone as electron acceptor. This chain is Dihydroorotate dehydrogenase (quinone), found in Aeromonas salmonicida (strain A449).